A 198-amino-acid chain; its full sequence is Large ribosomal subunit protein uL23c (198 aa).

Residues 1 to 76 (MATTAPNLHS…SFGRDLMVAQ (76 aa)) constitute a chloroplast transit peptide.

This sequence belongs to the universal ribosomal protein uL23 family. In terms of assembly, component of the chloroplast large ribosomal subunit (LSU). Mature 70S chloroplast ribosomes of higher plants consist of a small (30S) and a large (50S) subunit. The 30S small subunit contains 1 molecule of ribosomal RNA (16S rRNA) and 24 different proteins. The 50S large subunit contains 3 rRNA molecules (23S, 5S and 4.5S rRNA) and 33 different proteins.

It localises to the plastid. It is found in the chloroplast. Functionally, component of the chloroplast ribosome (chloro-ribosome), a dedicated translation machinery responsible for the synthesis of chloroplast genome-encoded proteins, including proteins of the transcription and translation machinery and components of the photosynthetic apparatus. The sequence is that of Large ribosomal subunit protein uL23c (RPL23) from Spinacia oleracea (Spinach).